Reading from the N-terminus, the 116-residue chain is Peptidyl-tRNA hydrolase (116 aa).

It belongs to the PTH2 family.

Its subcellular location is the cytoplasm. It catalyses the reaction an N-acyl-L-alpha-aminoacyl-tRNA + H2O = an N-acyl-L-amino acid + a tRNA + H(+). In terms of biological role, the natural substrate for this enzyme may be peptidyl-tRNAs which drop off the ribosome during protein synthesis. The protein is Peptidyl-tRNA hydrolase (pth) of Methanococcus maripaludis (strain DSM 14266 / JCM 13030 / NBRC 101832 / S2 / LL).